The sequence spans 994 residues: Tyrosine-protein kinase Mer (994 aa).

The N-terminal stretch at 1–18 (MVLAPLLLGLLLLPALWS) is a signal peptide. Residues 19-497 (GGTAEKWEET…TPAPGNTDSM (479 aa)) lie on the Extracellular side of the membrane. The disordered stretch occupies residues 44–78 (VNHRPFSAPHSSRDQLPPPQTGRSHPAHTAAPQVT). 2 consecutive Ig-like C2-type domains span residues 75-181 (PQVT…EIVS) and 192-268 (PYFI…LTVS). 15 N-linked (GlcNAc...) asparagine glycosylation sites follow: Asn-91, Asn-108, Asn-165, Asn-202, Asn-210, Asn-229, Asn-289, Asn-311, Asn-324, Asn-331, Asn-349, Asn-384, Asn-390, Asn-437, and Asn-449. The cysteines at positions 109 and 170 are disulfide-linked. A disulfide bridge links Cys-213 with Cys-257. 2 Fibronectin type-III domains span residues 281–376 (PPTE…TTEG) and 381–478 (APLN…IPEH). Residues 498 to 518 (FIILGCFCGFILIGLILCISL) form a helical membrane-spanning segment. Residues 519–994 (ALRRRVQETK…DSLEDSEVLM (476 aa)) are Cytoplasmic-facing. Ser-538 is subject to Phosphoserine. Positions 582–852 (LVLGKVLGEG…SVLRLQLEKL (271 aa)) constitute a Protein kinase domain. Residues 588–596 (LGEGEFGSV) and Lys-610 each bind ATP. The Proton acceptor role is filled by Asp-718. Residues Tyr-744, Tyr-748, Tyr-749, and Tyr-867 each carry the phosphotyrosine; by autocatalysis modification.

Belongs to the protein kinase superfamily. Tyr protein kinase family. AXL/UFO subfamily. In terms of assembly, interacts (upon activation) with TNK2; stimulates TNK2 autophosphorylation. Interacts (via N-terminus) with extracellular ligands LGALS3, TUB, TULP1 and GAS6. Interacts with VAV1 in a phosphotyrosine-independent manner. Interacts with TIMD4; this interaction enhances TIMD4-mediated efferocytosis. Post-translationally, autophosphorylated on Tyr-744, Tyr-748 and Tyr-749 in the activation loop allowing full activity. Autophosphorylated on Tyr-867 leading to recruitment of downstream partners of the signaling cascade such as PLCG2. Expressed predominantly in the hematopoietic lineages: macrophages, NK cells, NKT cells, dendritic cells and platelets.

It is found in the cell membrane. The enzyme catalyses L-tyrosyl-[protein] + ATP = O-phospho-L-tyrosyl-[protein] + ADP + H(+). Its function is as follows. Receptor tyrosine kinase that transduces signals from the extracellular matrix into the cytoplasm by binding to several ligands including LGALS3, TUB, TULP1 or GAS6. Regulates many physiological processes including cell survival, migration, differentiation, and phagocytosis of apoptotic cells (efferocytosis). Ligand binding at the cell surface induces autophosphorylation of MERTK on its intracellular domain that provides docking sites for downstream signaling molecules. Following activation by ligand, interacts with GRB2 or PLCG2 and induces phosphorylation of MAPK1, MAPK2, FAK/PTK2 or RAC1. MERTK signaling plays a role in various processes such as macrophage clearance of apoptotic cells, platelet aggregation, cytoskeleton reorganization and engulfment. Functions in the retinal pigment epithelium (RPE) as a regulator of rod outer segments fragments phagocytosis. Also plays an important role in inhibition of Toll-like receptors (TLRs)-mediated innate immune response by activating STAT1, which selectively induces production of suppressors of cytokine signaling SOCS1 and SOCS3. In Mus musculus (Mouse), this protein is Tyrosine-protein kinase Mer (Mertk).